Reading from the N-terminus, the 336-residue chain is F420-dependent glucose-6-phosphate dehydrogenase (336 aa).

A coenzyme F420-(gamma-Glu)n-binding site is contributed by Asp39. His40 functions as the Proton donor in the catalytic mechanism. Residues Thr76 and 107 to 108 (TG) contribute to the coenzyme F420-(gamma-Glu)n site. Glu109 functions as the Proton acceptor in the catalytic mechanism. Residues Asn112, 177 to 178 (GG), and 180 to 181 (QV) each bind coenzyme F420-(gamma-Glu)n. Residues Thr195, Lys198, Lys259, and Arg283 each contribute to the substrate site.

This sequence belongs to the F420-dependent glucose-6-phosphate dehydrogenase family. Homodimer.

The enzyme catalyses oxidized coenzyme F420-(gamma-L-Glu)(n) + D-glucose 6-phosphate + H(+) = 6-phospho-D-glucono-1,5-lactone + reduced coenzyme F420-(gamma-L-Glu)(n). In terms of biological role, catalyzes the coenzyme F420-dependent oxidation of glucose 6-phosphate (G6P) to 6-phosphogluconolactone. Appears to have a role in resistance to oxidative stress, via its consumption of G6P that serves as a source of reducing power to combat oxidative stress in mycobacteria. The chain is F420-dependent glucose-6-phosphate dehydrogenase from Mycolicibacterium gilvum (strain PYR-GCK) (Mycobacterium gilvum (strain PYR-GCK)).